We begin with the raw amino-acid sequence, 309 residues long: tRNA pseudouridine synthase B (309 aa).

D51 acts as the Nucleophile in catalysis.

Belongs to the pseudouridine synthase TruB family. Type 1 subfamily.

It catalyses the reaction uridine(55) in tRNA = pseudouridine(55) in tRNA. In terms of biological role, responsible for synthesis of pseudouridine from uracil-55 in the psi GC loop of transfer RNAs. In Coxiella burnetii (strain RSA 493 / Nine Mile phase I), this protein is tRNA pseudouridine synthase B.